We begin with the raw amino-acid sequence, 479 residues long: Protein kinase 2 (479 aa).

A disordered region spans residues 1–136 (MGKGQSKIKN…NGNDDEDEGP (136 aa)). 2 stretches are compositionally biased toward low complexity: residues 52–65 (AQQQ…TTAA) and 79–96 (IPAP…TPTI). Over residues 102 to 115 (NTDNNNINGASNEA) the composition is skewed to polar residues. In terms of domain architecture, Protein kinase spans 153-407 (FELLNVIGKG…GGEVKQHPWF (255 aa)). Residues 159-167 (IGKGSFGKV) and lysine 182 each bind ATP. Aspartate 276 serves as the catalytic Proton acceptor. A Phosphothreonine; by autocatalysis modification is found at threonine 309. Residues 408–479 (KNIDWEKLDR…TYVADSILKD (72 aa)) form the AGC-kinase C-terminal domain. Threonine 470 carries the phosphothreonine modification.

The protein belongs to the protein kinase superfamily. AGC Ser/Thr protein kinase family. S6 kinase subfamily. Post-translationally, seems to be myristoylated.

The protein localises to the cytoplasm. It is found in the cell membrane. The catalysed reaction is L-seryl-[protein] + ATP = O-phospho-L-seryl-[protein] + ADP + H(+). It carries out the reaction L-threonyl-[protein] + ATP = O-phospho-L-threonyl-[protein] + ADP + H(+). Its function is as follows. Required for morphogenesis during multicellular development. Phosphorylates talB, gefN, gefS, PI4P 5-kinase and gacQ. The sequence is that of Protein kinase 2 (pkgB) from Dictyostelium discoideum (Social amoeba).